A 357-amino-acid chain; its full sequence is MNDTSELIMVAMSGGVDSSVAAMLLLEQGYDVAGVSLQLKSNNEPYGNGYNLKLINRAREVAAALGIPHYVVDLSDIFSQRVIADFCQQYSQGRTPNPCIRCNYYVKIGALLEKIPDFNAGYLATGHYARVLSDENGTHLLKGADEKKDQSYFLYTLPPESLSRLIFPLGKRYKKDIIRLADKMKLPVSQKESQDVCFIPDGDYKSFLATRMGFTPGKILDKTGKILGEHQGLPLYTIGQRQGLGLASNEKLFVSDMNPEANTIMVASHDQLYTSRILLSNFIWRESRIPLDTPGMIVKVRYKAAPAEVKKISQTGDFYLLELASPVWAATPGQAAVIYLGDMVLGGGIIEHGGDVA.

ATP-binding positions include Ala11–Ser18 and Leu37. The active-site Nucleophile is the Cys102. Cys102 and Cys197 are joined by a disulfide. Gly126 is a binding site for ATP. Residues Lys148 to Gln150 form an interaction with tRNA region. Cys197 serves as the catalytic Cysteine persulfide intermediate. An interaction with tRNA region spans residues Arg301–Tyr302.

It belongs to the MnmA/TRMU family.

The protein localises to the cytoplasm. The catalysed reaction is S-sulfanyl-L-cysteinyl-[protein] + uridine(34) in tRNA + AH2 + ATP = 2-thiouridine(34) in tRNA + L-cysteinyl-[protein] + A + AMP + diphosphate + H(+). In terms of biological role, catalyzes the 2-thiolation of uridine at the wobble position (U34) of tRNA, leading to the formation of s(2)U34. The protein is tRNA-specific 2-thiouridylase MnmA of Dehalococcoides mccartyi (strain ATCC BAA-2266 / KCTC 15142 / 195) (Dehalococcoides ethenogenes (strain 195)).